Reading from the N-terminus, the 79-residue chain is MAKSFFAAFLIIMLISSLVDGKSTVGQKLKKKLNQAVDKVKEVLNKSEYMCPVVSSFCKQHCARLGKSGQCDLLECICS.

Positions M1–G21 are cleaved as a signal peptide. Positions E48–S79 constitute a BetaSPN-type CS-alpha/beta domain. Disulfide bonds link C51–C71, C58–C76, and C62–C78.

As to expression, expressed by the venom gland.

Its subcellular location is the secreted. In terms of biological role, the full peptide presents antibacterial and cytotoxic activities. The synthetic C-terminus (AA 33-76) inhibits voltage-gated potassium channels Kv1.1/KCNA1, Kv1.2/KCNA2, and Kv1.3/KCNA3. This chain is Potassium channel toxin Hge-beta-KTx, found in Hoffmannihadrurus gertschi (Scorpion).